The chain runs to 275 residues: tRNA pseudouridine synthase A (275 aa).

D60 (nucleophile) is an active-site residue. Y119 contacts substrate.

The protein belongs to the tRNA pseudouridine synthase TruA family. As to quaternary structure, homodimer.

It catalyses the reaction uridine(38/39/40) in tRNA = pseudouridine(38/39/40) in tRNA. Functionally, formation of pseudouridine at positions 38, 39 and 40 in the anticodon stem and loop of transfer RNAs. In Synechocystis sp. (strain ATCC 27184 / PCC 6803 / Kazusa), this protein is tRNA pseudouridine synthase A.